The primary structure comprises 303 residues: ATP synthase gamma chain (303 aa).

The protein belongs to the ATPase gamma chain family. F-type ATPases have 2 components, CF(1) - the catalytic core - and CF(0) - the membrane proton channel. CF(1) has five subunits: alpha(3), beta(3), gamma(1), delta(1), epsilon(1). CF(0) has three main subunits: a, b and c.

Its subcellular location is the cell inner membrane. Its function is as follows. Produces ATP from ADP in the presence of a proton gradient across the membrane. The gamma chain is believed to be important in regulating ATPase activity and the flow of protons through the CF(0) complex. In Bartonella henselae (strain ATCC 49882 / DSM 28221 / CCUG 30454 / Houston 1) (Rochalimaea henselae), this protein is ATP synthase gamma chain.